A 433-amino-acid polypeptide reads, in one-letter code: Arabinooligosaccharide-binding protein (433 aa).

A signal peptide spans Met-1–Gly-21. The N-palmitoyl cysteine moiety is linked to residue Cys-22. A lipid anchor (S-diacylglycerol cysteine) is attached at Cys-22.

It belongs to the bacterial solute-binding protein 1 family. The complex is composed of two ATP-binding proteins (MsmX), two transmembrane proteins (AraP and AraQ) and a solute-binding protein (AraN).

The protein resides in the cell membrane. Its function is as follows. Part of the ABC transporter complex AraNPQ involved in the uptake of arabinooligosaccharides. Transports alpha-1,5-arabinooligosaccharides, at least up to four L-arabinosyl units. AraN captures the substrate and delivers it to the two transmembrane components. The protein is Arabinooligosaccharide-binding protein of Bacillus subtilis (strain 168).